The primary structure comprises 221 residues: Glutathione S-transferase class-mu 26 kDa isozyme 1 (221 aa).

Positions 2–82 (PAKLGYWKIR…YIADKHGMIG (81 aa)) constitute a GST N-terminal domain. Glutathione is bound by residues 7 to 8 (YW), 40 to 44 (WFSKK), 53 to 54 (NL), and 66 to 67 (QS). In terms of domain architecture, GST C-terminal spans 84–202 (TPEERARVSM…ESNRFIKWPL (119 aa)). Tyr-110 is a substrate binding site.

The protein belongs to the GST superfamily. Mu family. Homodimer.

The catalysed reaction is RX + glutathione = an S-substituted glutathione + a halide anion + H(+). Functionally, conjugation of reduced glutathione to a wide number of exogenous and endogenous hydrophobic electrophiles. GST isoenzymes appear to play a central role in the parasite detoxification system. Other functions are also suspected including a role in increasing the solubility of haematin in the parasite gut. The polypeptide is Glutathione S-transferase class-mu 26 kDa isozyme 1 (Fasciola hepatica (Liver fluke)).